The sequence spans 334 residues: Ornithine carbamoyltransferase (334 aa).

Residues Ser56–Thr59, Gln83, Arg107, and His134–Gln137 each bind carbamoyl phosphate. Residues Asn168, Asp232, and Ser236–Met237 contribute to the L-ornithine site. Residues Cys274–Leu275 and Arg320 each bind carbamoyl phosphate.

This sequence belongs to the aspartate/ornithine carbamoyltransferase superfamily. OTCase family.

It localises to the cytoplasm. The catalysed reaction is carbamoyl phosphate + L-ornithine = L-citrulline + phosphate + H(+). It participates in amino-acid biosynthesis; L-arginine biosynthesis; L-arginine from L-ornithine and carbamoyl phosphate: step 1/3. Its function is as follows. Reversibly catalyzes the transfer of the carbamoyl group from carbamoyl phosphate (CP) to the N(epsilon) atom of ornithine (ORN) to produce L-citrulline. This is Ornithine carbamoyltransferase from Shigella boydii serotype 4 (strain Sb227).